The chain runs to 237 residues: MVVEDTQKSVITEDQYPSRVVSDNNNDDDDDDLEEGEIPVDGEDSGATATTKPPAALARNPHPLENSWTFWFDNPSSKSKQAAWGSSIRPIYTFATVEEFWSIYNNIHHPSKLGLGADFHCFKHKIEPKWEDPICANGGKWTMTFPRGKSDTSWLYTLLAMIGEQFDHGDEICGAVVNVRSRQDKIAIWTKNASNEAAQVSIGKQWKEFLDYNDTIGFIFHEDAKKLDRGAKNKYVV.

Residues 1–61 (MVVEDTQKSV…KPPAALARNP (61 aa)) form a disordered region. Over residues 25–44 (NNDDDDDDLEEGEIPVDGED) the composition is skewed to acidic residues. Residues 47–58 (ATATTKPPAALA) show a composition bias toward low complexity. EIF4G-binding stretches follow at residues 62–65 (HPLE) and 72–108 (FDNPSSKSKQAAWGSSIRPIYTFATVEEFWSIYNNIH). Residues 80 to 85 (KQAAWG), Lys112, and 130 to 131 (WE) each bind mRNA. An intrachain disulfide couples Cys135 to Cys173. Residues 156-165 (YTLLAMIGEQ) are EIF4G-binding. Residues 180 to 185 (RSRQDK) and 225 to 229 (KKLDR) each bind mRNA.

This sequence belongs to the eukaryotic initiation factor 4E family. In terms of assembly, EIF4F is a multi-subunit complex, the composition of which varies with external and internal environmental conditions. It is composed of at least EIF4A, EIF4E and EIF4G. EIF4E is also known to interact with other partners. In higher plants two isoforms of EIF4F have been identified, named isoform EIF4F and isoform EIF(iso)4F. Isoform EIF4F has subunits p220 and p26, whereas isoform EIF(iso)4F has subunits p82 and p28. (Microbial infection) Interacts with potyvirus viral genome-linked protein (VPg) in the nucleus; this interaction is possible in susceptible hosts but is impaired in resistant plants. Binds to soybean mosaic virus (SMV) VPg in the nucleus. Interacts with SMV nuclear inclusion protein A (NIa-Pro) and nuclear inclusion protein B (NIb) in the cytoplasm. According to the redox status, the Cys-135-Cys-173 disulfide bridge may have a role in regulating protein function by affecting its ability to bind capped mRNA. Mostly expressed in roots, flowers, immature pods and mature seeds, and, to a lower extent, in stems and leaves.

The protein localises to the nucleus. The protein resides in the cytoplasm. In terms of biological role, component of the protein complex eIF4F, which is involved in the recognition of the mRNA cap, ATP-dependent unwinding of 5'-terminal secondary structure and recruitment of mRNA to the ribosome. Recognizes and binds the 7-methylguanosine-containing mRNA cap during an early step in the initiation of protein synthesis and facilitates ribosome binding by inducing the unwinding of the mRNAs secondary structures. Key component of recessive resistance to potyviruses (e.g. soybean mosaic virus (SMV), bean common mosaic virus (BCMV) and watermelon mosaic virus (WMV), but not bean pod mottle virus (BPMV)). Functionally, (Microbial infection) Susceptibility host factor required for viral infection by recruiting viral RNAs to the host ribosomal complex via an interaction with viral genome-linked protein (VPg). The polypeptide is Eukaryotic translation initiation factor 4E-1 (Glycine max (Soybean)).